We begin with the raw amino-acid sequence, 546 residues long: Chaperonin GroEL (546 aa).

Residues 30-33, Lys51, 87-91, Gly415, 479-481, and Asp495 each bind ATP; these read TLGP, DGTTT, and NAA.

It belongs to the chaperonin (HSP60) family. In terms of assembly, forms a cylinder of 14 subunits composed of two heptameric rings stacked back-to-back. Interacts with the co-chaperonin GroES.

The protein resides in the cytoplasm. The enzyme catalyses ATP + H2O + a folded polypeptide = ADP + phosphate + an unfolded polypeptide.. In terms of biological role, together with its co-chaperonin GroES, plays an essential role in assisting protein folding. The GroEL-GroES system forms a nano-cage that allows encapsulation of the non-native substrate proteins and provides a physical environment optimized to promote and accelerate protein folding. This chain is Chaperonin GroEL, found in Xanthomonas campestris pv. phaseoli.